Here is a 174-residue protein sequence, read N- to C-terminus: UPF0340 protein MW2038 (174 aa).

Belongs to the UPF0340 family.

This Staphylococcus aureus (strain MW2) protein is UPF0340 protein MW2038.